The sequence spans 231 residues: MAKLTKRQKAIAEKIEAGKSYNFVDAAALLTELSTVKFSESIDVAVNLGVDPRKSDQVVRSATVLPHGTGKTVRVAVFTQGPAAEAALAAGADRVGMDDLAAEMKAGDLNYDVVIASPDAMRVVGQLGQVLGPRGLMPNPKVGTVTPDVATAVKNAKAGQVRYRTDKNGIIHTSVGKVGFDAVKLKENVEALIADLKRIKPASSKGIYVKRITLSTTMGPGLVIDQGSLEA.

This sequence belongs to the universal ribosomal protein uL1 family. In terms of assembly, part of the 50S ribosomal subunit.

In terms of biological role, binds directly to 23S rRNA. The L1 stalk is quite mobile in the ribosome, and is involved in E site tRNA release. Protein L1 is also a translational repressor protein, it controls the translation of the L11 operon by binding to its mRNA. The chain is Large ribosomal subunit protein uL1 from Pseudomonas syringae pv. tomato (strain ATCC BAA-871 / DC3000).